The chain runs to 352 residues: 4-hydroxy-3-methylbut-2-en-1-yl diphosphate synthase (flavodoxin) (352 aa).

Residues Cys262, Cys265, Cys297, and Glu304 each coordinate [4Fe-4S] cluster.

It belongs to the IspG family. Requires [4Fe-4S] cluster as cofactor.

It catalyses the reaction (2E)-4-hydroxy-3-methylbut-2-enyl diphosphate + oxidized [flavodoxin] + H2O + 2 H(+) = 2-C-methyl-D-erythritol 2,4-cyclic diphosphate + reduced [flavodoxin]. The protein operates within isoprenoid biosynthesis; isopentenyl diphosphate biosynthesis via DXP pathway; isopentenyl diphosphate from 1-deoxy-D-xylulose 5-phosphate: step 5/6. Functionally, converts 2C-methyl-D-erythritol 2,4-cyclodiphosphate (ME-2,4cPP) into 1-hydroxy-2-methyl-2-(E)-butenyl 4-diphosphate. In Campylobacter concisus (strain 13826), this protein is 4-hydroxy-3-methylbut-2-en-1-yl diphosphate synthase (flavodoxin).